Consider the following 591-residue polypeptide: UvrABC system protein C (591 aa).

Residues 14 to 91 form the GIY-YIG domain; the sequence is DQPGCYLMKD…IKKHDPKYNV (78 aa). Residues 196–231 form the UVR domain; sequence KEVKVELEKKMHKAAEELNFERAKELRDTLGYMEAV.

The protein belongs to the UvrC family. As to quaternary structure, interacts with UvrB in an incision complex.

It localises to the cytoplasm. The UvrABC repair system catalyzes the recognition and processing of DNA lesions. UvrC both incises the 5' and 3' sides of the lesion. The N-terminal half is responsible for the 3' incision and the C-terminal half is responsible for the 5' incision. This chain is UvrABC system protein C, found in Halalkalibacterium halodurans (strain ATCC BAA-125 / DSM 18197 / FERM 7344 / JCM 9153 / C-125) (Bacillus halodurans).